Reading from the N-terminus, the 574-residue chain is Acyloxyacyl hydrolase (574 aa).

The first 22 residues, 1-22 (MKFPWKVFKTTLLLLLLSHSLA), serve as a signal peptide directing secretion. Residues 23-33 (SVPSEDQPGDS) constitute a propeptide that is removed on maturation. In terms of domain architecture, Saposin B-type spans 36 to 117 (HGQSCLGCVV…YALEFCKRGA (82 aa)). Residues 37-69 (GQSCLGCVVLVSVIEQLAEVHNSSVQVAMERLC) are important for enzyme activity, localization to cytoplasmic vesicles, and protein stability. Cystine bridges form between Cys-40-Cys-113, Cys-43-Cys-107, Cys-69-Cys-82, Cys-122-Cys-452, Cys-159-Cys-168, Cys-205-Cys-229, Cys-248-Cys-328, and Cys-375-Cys-458. Asn-58 is a glycosylation site (N-linked (GlcNAc...) asparagine). The segment at 172-176 (ELSIK) is lipopolysaccharide binding. The Ca(2+) site is built by Asp-183, Asp-185, Asp-187, His-189, Asp-204, Asn-206, Asp-207, Asp-209, Val-212, Asp-222, Asp-226, Asn-228, Asn-230, Ile-232, and Glu-244. Residue Asn-206 is glycosylated (N-linked (GlcNAc...) asparagine). Ser-262 is an active-site residue. Residues Asn-408 and Asn-465 are each glycosylated (N-linked (GlcNAc...) asparagine).

Heterodimer of the large and small subunits; disulfide-linked. Requires Ca(2+) as cofactor. In terms of processing, cleaved into a large and a small subunit. The small subunit is N-glycosylated. As to expression, detected in peritoneal macrophages (at protein level). Strongly expressed in kidney cortex, where it may be produced by proximal tubule cells. In liver, expressed at high levels in Kupffer cells. Expressed by dendritic cells. Detected at low levels in alveolar macrophages.

The protein resides in the secreted. The protein localises to the cytoplasmic vesicle. It carries out the reaction a 3-(acyloxy)acyl derivative of bacterial toxin + H2O = a 3-hydroxyacyl derivative of bacterial toxin + a fatty acid + H(+). Removes the secondary (acyloxyacyl-linked) fatty acyl chains from the lipid A region of bacterial lipopolysaccharides (LPS). By breaking down LPS, terminates the host response to bacterial infection and prevents prolonged and damaging inflammatory responses. In peritoneal macrophages, seems to be important for recovery from a state of immune tolerance following infection by Gram-negative bacteria. The sequence is that of Acyloxyacyl hydrolase from Mus musculus (Mouse).